A 167-amino-acid chain; its full sequence is Ribosome-binding factor A (167 aa).

Residues 122–167 (LAASAKHAGEADPYKGDSPEDIDEDDFDEEDTDLSGDNDLDEDANR) are disordered. Over residues 128-139 (HAGEADPYKGDS) the composition is skewed to basic and acidic residues. The segment covering 140 to 167 (PEDIDEDDFDEEDTDLSGDNDLDEDANR) has biased composition (acidic residues).

This sequence belongs to the RbfA family. As to quaternary structure, monomer. Binds 30S ribosomal subunits, but not 50S ribosomal subunits or 70S ribosomes.

The protein resides in the cytoplasm. One of several proteins that assist in the late maturation steps of the functional core of the 30S ribosomal subunit. Associates with free 30S ribosomal subunits (but not with 30S subunits that are part of 70S ribosomes or polysomes). Required for efficient processing of 16S rRNA. May interact with the 5'-terminal helix region of 16S rRNA. This Paenarthrobacter aurescens (strain TC1) protein is Ribosome-binding factor A.